The primary structure comprises 259 residues: Protein N-terminal and lysine N-methyltransferase efm7 (259 aa).

S-adenosyl-L-methionine is bound by residues tryptophan 53, 80 to 82 (GAA), aspartate 102, tryptophan 138, and alanine 164.

The protein belongs to the class I-like SAM-binding methyltransferase superfamily. EFM7 family.

It localises to the cytoplasm. Its function is as follows. S-adenosyl-L-methionine-dependent protein methyltransferase that trimethylates the N-terminal glycine 'Gly-2' of elongation factor 1-alpha, before also catalyzing the mono- and dimethylation of 'Lys-3'. The protein is Protein N-terminal and lysine N-methyltransferase efm7 of Emericella nidulans (strain FGSC A4 / ATCC 38163 / CBS 112.46 / NRRL 194 / M139) (Aspergillus nidulans).